We begin with the raw amino-acid sequence, 378 residues long: Histone deacetylase 8 (378 aa).

The tract at residues 15–325 (RSVVYVYSPE…WTYLTGTVLG (311 aa)) is histone deacetylase. Aspartate 102 contributes to the substrate binding site. Catalysis depends on histidine 144, which acts as the Proton acceptor. Residue glycine 152 coordinates substrate. A divalent metal cation contacts are provided by aspartate 179, histidine 181, and aspartate 268. Residue tyrosine 307 participates in substrate binding.

It belongs to the histone deacetylase family. HD type 1 subfamily. It depends on a divalent metal cation as a cofactor.

The protein localises to the nucleus. Its subcellular location is the chromosome. It localises to the cytoplasm. It catalyses the reaction N(6)-acetyl-L-lysyl-[histone] + H2O = L-lysyl-[histone] + acetate. The catalysed reaction is N(6)-acetyl-L-lysyl-[protein] + H2O = L-lysyl-[protein] + acetate. It carries out the reaction N(6)-(2E)-butenoyl-L-lysyl-[protein] + H2O = (2E)-2-butenoate + L-lysyl-[protein]. With respect to regulation, its activity is inhibited by trichostatin A (TSA) and butyrate, 2 well known histone deacetylase inhibitors. In terms of biological role, histone deacetylase that catalyzes the deacetylation of lysine residues on the N-terminal part of the core histones (H2A, H2B, H3 and H4). Histone deacetylation gives a tag for epigenetic repression and plays an important role in transcriptional regulation, cell cycle progression and developmental events. Histone deacetylases act via the formation of large multiprotein complexes. Also involved in the deacetylation of non-histone proteins. In addition to protein deacetylase activity, also has protein-lysine deacylase activity: acts as a protein decrotonylase by mediating decrotonylation ((2E)-butenoyl) of histones. This chain is Histone deacetylase 8 (hdac8), found in Danio rerio (Zebrafish).